A 69-amino-acid chain; its full sequence is Large ribosomal subunit protein uL29 (69 aa).

This sequence belongs to the universal ribosomal protein uL29 family.

This is Large ribosomal subunit protein uL29 from Lachnoclostridium phytofermentans (strain ATCC 700394 / DSM 18823 / ISDg) (Clostridium phytofermentans).